A 109-amino-acid chain; its full sequence is FAD assembly factor SdhE (109 aa).

A disordered region spans residues 1–22; that stretch reads MQDNFTASSPSSSSSASGVAED. Positions 7–17 are enriched in low complexity; the sequence is ASSPSSSSSAS.

This sequence belongs to the SdhE FAD assembly factor family.

It localises to the cytoplasm. Its function is as follows. An FAD assembly protein, which accelerates covalent attachment of the cofactor into other proteins. Plays an essential role in the assembly of succinate dehydrogenase (SDH, respiratory complex II), an enzyme complex that is a component of both the tricarboxylic acid cycle and the electron transport chain, and which couples the oxidation of succinate to fumarate with the reduction of ubiquinone (coenzyme Q) to ubiquinol. Required for flavinylation of SdhA, when the SDH operon and this gene are overexpressed in G.oxydans. Flavinylation of SdhA is detected only in the presence of sdhE. This is FAD assembly factor SdhE from Acetobacter pasteurianus (strain NBRC 105184 / IFO 3283-01).